A 180-amino-acid chain; its full sequence is Ribosome maturation factor RimM (180 aa).

Residues 99 to 179 enclose the PRC barrel domain; that stretch reads NNEYYWKDIV…IVIKNWKQTF (81 aa).

This sequence belongs to the RimM family. Binds ribosomal protein uS19.

It localises to the cytoplasm. An accessory protein needed during the final step in the assembly of 30S ribosomal subunit, possibly for assembly of the head region. Essential for efficient processing of 16S rRNA. May be needed both before and after RbfA during the maturation of 16S rRNA. It has affinity for free ribosomal 30S subunits but not for 70S ribosomes. The polypeptide is Ribosome maturation factor RimM (Buchnera aphidicola subsp. Baizongia pistaciae (strain Bp)).